The sequence spans 739 residues: BEL1-like homeodomain protein 2 (739 aa).

2 disordered regions span residues 23-73 and 143-222; these read SQDY…ESSV and LMNP…NSQT. The span at 41 to 58 shows a compositional bias: polar residues; sequence NFSNGFDRSDSPNLTTQQ. Pro residues predominate over residues 145-155; sequence NPPPPQQPPSP. A compositionally biased stretch (low complexity) spans 179 to 190; sequence TNTTHHQNYTNH. Positions 316 to 332 are SR/KY domain; that stretch reads SRYTTAAQELLEEFCSV. The tract at residues 341–378 is disordered; it reads KLGNSSNPNTCGGDGGGSSPSSAGANKEHPPLSASDRI. The segment at 376–447 is BELL domain; sequence DRIEHQRRKV…CLKDAVAAQL (72 aa). The homeobox DNA-binding region spans 498–560; that stretch reads AWRPQRGLPE…NARVRLWKPM (63 aa). Residues 567–627 are disordered; sequence QESKEREREE…TAPDASDADA (61 aa). The span at 576 to 585 shows a compositional bias: acidic residues; sequence EELEENEEDQ. Basic and acidic residues predominate over residues 586–596; it reads ETKNSNDDKST. Low complexity predominate over residues 597–627; sequence KSNNNESNFTAVRTTSQTPTTTAPDASDADA.

This sequence belongs to the TALE/BELL homeobox family. In terms of assembly, may form heterodimeric complexes with TALE/KNOX proteins STM, KNAT1/BP, KNAT2 and KNAT5. Interacts with OFP1, OFP2, OFP4 and OFP5. Interacts with KNATM, isoform KNATM-B. In terms of tissue distribution, expressed in lateral organs.

The protein resides in the nucleus. In terms of biological role, transcription factor that establishes leaf shape by repressing growth in specific subdomains of the leaf. Negatively regulates knox homeobox gene KNAT1/BP expression. The protein is BEL1-like homeodomain protein 2 (BLH2) of Arabidopsis thaliana (Mouse-ear cress).